The following is a 387-amino-acid chain: Large ribosomal subunit protein uL3 (387 aa).

Belongs to the universal ribosomal protein uL3 family.

The protein resides in the cytoplasm. The protein is Large ribosomal subunit protein uL3 (RPL3) of Kluyveromyces lactis (strain ATCC 8585 / CBS 2359 / DSM 70799 / NBRC 1267 / NRRL Y-1140 / WM37) (Yeast).